The sequence spans 73 residues: Putative defensin-like protein 33 (73 aa).

Positions 1–25 (MASNKVSFIFILFLCVLSTAEFGEA) are cleaved as a signal peptide. 3 disulfides stabilise this stretch: Cys33/Cys59, Cys45/Cys68, and Cys49/Cys70.

The protein belongs to the DEFL family.

Its subcellular location is the secreted. The polypeptide is Putative defensin-like protein 33 (Arabidopsis thaliana (Mouse-ear cress)).